The following is a 21-amino-acid chain: uncharacterized protein (21 aa).

This is an uncharacterized protein from Dictyostelium discoideum (Social amoeba).